The following is a 251-amino-acid chain: Myozenin-3 (251 aa).

Serine 31 carries the post-translational modification Phosphoserine. The tract at residues 50-67 (LLFQKRQRRVQKFTFELA) is binding to ACTN2, PPP3CA and TCAP. Residues 67–110 (AASQRAMLAGSARRKVTGTAESGTVANANGPEGPNYRSELHIFP) are binding to FLNC. Positions 79–102 (RRKVTGTAESGTVANANGPEGPNY) are disordered. The interval 186 to 207 (PSPNDYRNFNKTPVPFGGPLVG) is binding to ACTN2.

Belongs to the myozenin family. In terms of assembly, interacts with ACTN2, LDB3, FLNC, PPP3CA and TCAP. As to expression, expressed specifically in skeletal muscle. Not detected in heart.

The protein localises to the cytoplasm. The protein resides in the myofibril. It is found in the sarcomere. Its subcellular location is the z line. Functionally, myozenins may serve as intracellular binding proteins involved in linking Z line proteins such as alpha-actinin, gamma-filamin, TCAP/telethonin, LDB3/ZASP and localizing calcineurin signaling to the sarcomere. Plays an important role in the modulation of calcineurin signaling. May play a role in myofibrillogenesis. The polypeptide is Myozenin-3 (Homo sapiens (Human)).